The chain runs to 451 residues: UDP-N-acetylmuramoylalanine--D-glutamate ligase (451 aa).

ATP is bound at residue 120–126 (GSNGKTT).

The protein belongs to the MurCDEF family.

It is found in the cytoplasm. The catalysed reaction is UDP-N-acetyl-alpha-D-muramoyl-L-alanine + D-glutamate + ATP = UDP-N-acetyl-alpha-D-muramoyl-L-alanyl-D-glutamate + ADP + phosphate + H(+). It functions in the pathway cell wall biogenesis; peptidoglycan biosynthesis. Cell wall formation. Catalyzes the addition of glutamate to the nucleotide precursor UDP-N-acetylmuramoyl-L-alanine (UMA). This chain is UDP-N-acetylmuramoylalanine--D-glutamate ligase (murD), found in Bacillus subtilis (strain 168).